A 501-amino-acid chain; its full sequence is Postreplication repair E3 ubiquitin-protein ligase rad18 (501 aa).

The RING-type zinc finger occupies 34–72 (CHVCKDFYDSPMLTSCNHTFCSLCIRRCLSVDSKCPLCR). Residues 111-154 (QAILPDQAGPSSPSKRKATEMEGPKEEDPESKRPRRSTRSTRAR) form a disordered region. A compositionally biased stretch (basic and acidic residues) spans 127–142 (KATEMEGPKEEDPESK). Positions 143 to 152 (RPRRSTRSTR) are enriched in basic residues. The UBZ4-type zinc-finger motif lies at 186-214 (LVACPICLTRMKEQQVDRHLDTSCPGSPQ). Zn(2+)-binding residues include Cys-189, Cys-192, His-204, and Cys-209. Positions 203 to 250 (RHLDTSCPGSPQAASKRRPIPAQTPQPSTFPSFNTRLTSQTNQKPPER) are disordered. Positions 225-246 (QTPQPSTFPSFNTRLTSQTNQK) are enriched in polar residues. The 35-residue stretch at 256-290 (YSMLRDTALRKKLSELGLSTHGSRQLLEKRHKEWI) folds into the SAP domain. Residues 377–501 (IKRQTLDGNG…GMKKPNPETC (125 aa)) are disordered.

It belongs to the RAD18 family. As to quaternary structure, interacts with E2 mus-8/ubc2, forming a complex with ubiquitin ligase activity.

The protein resides in the nucleus. The catalysed reaction is S-ubiquitinyl-[E2 ubiquitin-conjugating enzyme]-L-cysteine + [acceptor protein]-L-lysine = [E2 ubiquitin-conjugating enzyme]-L-cysteine + N(6)-ubiquitinyl-[acceptor protein]-L-lysine.. It participates in protein modification; protein ubiquitination. E3 RING-finger protein, member of the UBC2/RAD6 epistasis group. Associates to the E2 ubiquitin conjugating enzyme mus-8/ubc2 to form the mus-8/ubc2-uvs-2/rad18 ubiquitin ligase complex involved in postreplicative repair (PRR) of damaged DNA. The polypeptide is Postreplication repair E3 ubiquitin-protein ligase rad18 (uvs-2) (Neurospora crassa (strain ATCC 24698 / 74-OR23-1A / CBS 708.71 / DSM 1257 / FGSC 987)).